Consider the following 111-residue polypeptide: Nucleoid-associated protein PFL_1905 (111 aa).

Disordered regions lie at residues 1-20 (MKGG…EKMA) and 88-111 (SNSQ…KLPF).

The protein belongs to the YbaB/EbfC family. In terms of assembly, homodimer.

The protein resides in the cytoplasm. Its subcellular location is the nucleoid. In terms of biological role, binds to DNA and alters its conformation. May be involved in regulation of gene expression, nucleoid organization and DNA protection. The chain is Nucleoid-associated protein PFL_1905 from Pseudomonas fluorescens (strain ATCC BAA-477 / NRRL B-23932 / Pf-5).